Consider the following 258-residue polypeptide: Chemokine-binding protein (258 aa).

Residues 1 to 17 form the signal peptide; the sequence is MKQYIVLACMCLAAAAM. A disordered region spans residues 65–93; that stretch reads TEITESESDPDPEVESEDDSTSVEDVDPP. Positions 68-91 are enriched in acidic residues; that stretch reads TESESDPDPEVESEDDSTSVEDVD.

The protein belongs to the orthopoxvirus OPG001 family. In terms of assembly, binds to host CC chemokines, such as RANTES/CCL5, MIP-1alpha/CCL3, MCP-1/CCL2 and eotaxin.

Its subcellular location is the secreted. In terms of biological role, inhibits host immune defense by binding to host chemokines. Binds host CC chemokines (beta chemokines) such as RANTES with high affinity, but not CXC or C chemokines (alpha and gamma chemokines). The protein is Chemokine-binding protein (OPG001) of Homo sapiens (Human).